The chain runs to 401 residues: Cartilage-associated protein (401 aa).

The first 26 residues, 1-26, serve as a signal peptide directing secretion; it reads MEPGRRGAAALLALLCVACALRAGRA. Residues Asn-87 and Asn-363 are each glycosylated (N-linked (GlcNAc...) asparagine).

This sequence belongs to the leprecan family. Found in articular chondrocytes. Expressed in a variety of tissues.

The protein localises to the secreted. The protein resides in the extracellular space. It is found in the extracellular matrix. Functionally, necessary for efficient 3-hydroxylation of fibrillar collagen prolyl residues. This is Cartilage-associated protein (CRTAP) from Homo sapiens (Human).